A 513-amino-acid polypeptide reads, in one-letter code: Glycerol-3-phosphate dehydrogenase (513 aa).

16-44 (DVAVIGGGINGVGIAADAAGRGLSVFLCE) is an FAD binding site.

It belongs to the FAD-dependent glycerol-3-phosphate dehydrogenase family. FAD is required as a cofactor.

Its subcellular location is the cytoplasm. The catalysed reaction is a quinone + sn-glycerol 3-phosphate = dihydroxyacetone phosphate + a quinol. The protein is Glycerol-3-phosphate dehydrogenase (glpD) of Pseudomonas tolaasii.